The sequence spans 66 residues: uncharacterized protein (66 aa).

The chain crosses the membrane as a helical span at residues 32–49 (WAFSLLIAGSAFLWIYMR).

The protein localises to the membrane. This is an uncharacterized protein from Bacillus subtilis (strain 168).